Consider the following 68-residue polypeptide: Protein SlyX homolog (68 aa).

This sequence belongs to the SlyX family.

In Pseudomonas putida (strain GB-1), this protein is Protein SlyX homolog.